The sequence spans 386 residues: Ribosomal large subunit pseudouridine synthase B (386 aa).

Residues E14 to V75 form the S4 RNA-binding domain. Residue D119 is the Nucleophile of the active site. Residues A260–R386 are disordered. 2 stretches are compositionally biased toward basic and acidic residues: residues K267–Q276 and A284–A306. Over residues R307–S321 the composition is skewed to low complexity. The segment covering E335–P354 has biased composition (basic and acidic residues).

The protein belongs to the pseudouridine synthase RsuA family.

The catalysed reaction is uridine(2605) in 23S rRNA = pseudouridine(2605) in 23S rRNA. Its function is as follows. Responsible for synthesis of pseudouridine from uracil-2605 in 23S ribosomal RNA. The protein is Ribosomal large subunit pseudouridine synthase B (rluB) of Pseudomonas aeruginosa (strain ATCC 15692 / DSM 22644 / CIP 104116 / JCM 14847 / LMG 12228 / 1C / PRS 101 / PAO1).